The following is a 345-amino-acid chain: MNDVFIIAGPTASGKSELAMLLAQKFNGVIINADSMQIYKEIPIITASPSISEKKQVDHYLYNYVSIFHSDINELNSFDNISQSKVNANYNNINLQQSITKHLTDRRYSVAQYVQEACKIIRSVIHALKLPIVVGGSGMYIKALVYGIHHIPEITCEIRMQVQDLYKKLTKQEFYQKLIDLDPISKNYIHSSDAQRMIRAYEVALQTNKSIFSYHNSKLVSPLECYNVKKIILLPDRQLLYQNCNQRFAKLATNGELVDEITKIKPYYDHISISAKKALGINEIISYLNQELTIEEAITIAQQKIRQYAKRQLTWFRNQTINGYTLHYQSMSELYKAQVNDVFFN.

Position 9–16 (9–16 (GPTASGKS)) interacts with ATP. 11-16 (TASGKS) is a binding site for substrate. 2 interaction with substrate tRNA regions span residues 34–37 (DSMQ) and 195–199 (QRMIR).

Belongs to the IPP transferase family. In terms of assembly, monomer. It depends on Mg(2+) as a cofactor.

It carries out the reaction adenosine(37) in tRNA + dimethylallyl diphosphate = N(6)-dimethylallyladenosine(37) in tRNA + diphosphate. In terms of biological role, catalyzes the transfer of a dimethylallyl group onto the adenine at position 37 in tRNAs that read codons beginning with uridine, leading to the formation of N6-(dimethylallyl)adenosine (i(6)A). The polypeptide is tRNA dimethylallyltransferase (Orientia tsutsugamushi (strain Boryong) (Rickettsia tsutsugamushi)).